The primary structure comprises 342 residues: MEGDNCNKSRHKSHNMINPNYASVRCTQPLPSVIQLRSRNKMIGITEDPSSDSEPVSSNQPLLLTNLSYEVHTFNDNNNHERPAPQEQSTQNTMISMQSEQKSDRFTASNLGMFQYMKFEIGEDGDDHEEEAILTNREKLRHILHSKPIHVAIIVLVVLDSFLVVGELLIDLKVIIVPHGNPAPEILHGFSLSILSIFMVEIALKIIADHRHFIHHKVEVLDAVVVVISFGVDIALIFVGESEALAAIGLLVILRLWRVFRIINGIIVTVKTKADDRVHEIKKKNSELELQIHNLEEKLSQKEQDMSRLHEILRCNNIDIPPTVPLTTSVQIHSTTTASADV.

Disordered stretches follow at residues 1–20 and 74–102; these read MEGD…INPN and FNDN…SEQK. Topologically, residues 1-148 are cytoplasmic; sequence MEGDNCNKSR…KLRHILHSKP (148 aa). The span at 86–102 shows a compositional bias: polar residues; that stretch reads QEQSTQNTMISMQSEQK. A helical transmembrane segment spans residues 149 to 169; sequence IHVAIIVLVVLDSFLVVGELL. Over 170 to 185 the chain is Extracellular; sequence IDLKVIIVPHGNPAPE. Residues 186 to 208 traverse the membrane as a helical segment; that stretch reads ILHGFSLSILSIFMVEIALKIIA. Residues 209 to 217 are Cytoplasmic-facing; it reads DHRHFIHHK. A helical membrane pass occupies residues 218–238; sequence VEVLDAVVVVISFGVDIALIF. The Extracellular portion of the chain corresponds to 239 to 247; sequence VGESEALAA. A helical transmembrane segment spans residues 248–268; it reads IGLLVILRLWRVFRIINGIIV. Residues 269 to 342 are Cytoplasmic-facing; the sequence is TVKTKADDRV…HSTTTASADV (74 aa). The stretch at 271-315 forms a coiled coil; sequence KTKADDRVHEIKKKNSELELQIHNLEEKLSQKEQDMSRLHEILRC.

It belongs to the hydrogen channel family. In terms of assembly, homodimer.

Its subcellular location is the membrane. The protein localises to the cell membrane. Its activity is regulated as follows. Less sensitive to zinc ions as compared to the mammalian homologs. Its function is as follows. Mediates the voltage-dependent proton permeability of excitable membranes. Forms a proton-selective channel through which protons may pass in accordance with their electrochemical gradient. This is Voltage-gated hydrogen channel 1 (HVCN1) from Ciona intestinalis (Transparent sea squirt).